Here is a 133-residue protein sequence, read N- to C-terminus: Profilin-1 (133 aa).

It belongs to the profilin family. Occurs in many kinds of cells as a complex with monomeric actin in a 1:1 ratio. As to expression, ubiquitous.

It is found in the cytoplasm. It localises to the cytoskeleton. Binds to actin and affects the structure of the cytoskeleton. At high concentrations, profilin prevents the polymerization of actin, whereas it enhances it at low concentrations. By binding to PIP2, it inhibits the formation of IP3 and DG. The polypeptide is Profilin-1 (PRO1) (Solanum lycopersicum (Tomato)).